The following is a 173-amino-acid chain: Probable glutathione peroxidase 5 (173 aa).

Residue G2 is the site of N-myristoyl glycine attachment. Residue C46 is part of the active site.

Belongs to the glutathione peroxidase family. In terms of tissue distribution, ubiquitous.

The protein resides in the cell membrane. It catalyses the reaction 2 glutathione + H2O2 = glutathione disulfide + 2 H2O. Functionally, may constitute a glutathione peroxidase-like protective system against oxidative stresses. The chain is Probable glutathione peroxidase 5 (GPX5) from Arabidopsis thaliana (Mouse-ear cress).